The chain runs to 667 residues: MGSSRLAALLLPLLLIVIDLSDSAGIGFRHLPHWNTRCPLASHTDDSFTGSSAYIPCRTWWALFSTKPWCVRVWHCSRCLCQHLLSGGSGLQRGLFHLLVQKSKKSSTFKFYRRHKMPAPAQRKLLPRRHLSEKSHHISIPSPDISHKGLRSKRTQPSDPETWESLPRLDSQRHGGPEFSFDLLPEARAIRVTISSGPEVSVRLCHQWALECEELSSPYDVQKIVSGGHTVELPYEFLLPCLCIEASYLQEDTVRRKKCPFQSWPEAYGSDFWKSVHFTDYSQHTQMVMALTLRCPLKLEAALCQRHDWHTLCKDLPNATARESDGWYVLEKVDLHPQLCFKFSFGNSSHVECPHQTGSLTSWNVSMDTQAQQLILHFSSRMHATFSAAWSLPGLGQDTLVPPVYTVSQARGSSPVSLDLIIPFLRPGCCVLVWRSDVQFAWKHLLCPDVSYRHLGLLILALLALLTLLGVVLALTCRRPQSGPGPARPVLLLHAADSEAQRRLVGALAELLRAALGGGRDVIVDLWEGRHVARVGPLPWLWAARTRVAREQGTVLLLWSGADLRPVSGPDPRAAPLLALLHAAPRPLLLLAYFSRLCAKGDIPPPLRALPRYRLLRDLPRLLRALDARPFAEATSWGRLGARQRRQSRLELCSRLEREAARLADLG.

Residues 1–23 (MGSSRLAALLLPLLLIVIDLSDS) form the signal peptide. Residues 24 to 454 (AGIGFRHLPH…LLCPDVSYRH (431 aa)) are Extracellular-facing. Positions 126 to 174 (LPRRHLSEKSHHISIPSPDISHKGLRSKRTQPSDPETWESLPRLDSQRH) are disordered. 3 N-linked (GlcNAc...) asparagine glycosylation sites follow: Asn318, Asn347, and Asn364. The chain crosses the membrane as a helical span at residues 455-475 (LGLLILALLALLTLLGVVLAL). Topologically, residues 476-667 (TCRRPQSGPG…REAARLADLG (192 aa)) are cytoplasmic. In terms of domain architecture, SEFIR spans 487-624 (ARPVLLLHAA…LLRDLPRLLR (138 aa)).

In terms of assembly, forms heterodimers with IL17RA; the heterodimer binds IL17C. Predominantly expressed in mucosal tissues with high levels in keratinocytes and colon epithelial cells. Very low expression in dermal fibroblasts. Expressed in various tumor cell lines.

It is found in the cell membrane. Its subcellular location is the cytoplasm. The protein resides in the secreted. Specific functional receptor for IL17C. May be signaling through the NF-kappa-B and MAPK pathways. May require TRAF3IP2 /ACT1 for signaling. May be a crucial regulator in innate immunity to bacterial pathogens. Isoform 2 and isoform 4 may be either cytoplasmic inactive or dominant active forms. Isoform 3 and isoform 5 may act as soluble decoy receptors. In Homo sapiens (Human), this protein is Interleukin-17 receptor E (IL17RE).